Reading from the N-terminus, the 218-residue chain is N-(5'-phosphoribosyl)anthranilate isomerase (218 aa).

Belongs to the TrpF family.

The catalysed reaction is N-(5-phospho-beta-D-ribosyl)anthranilate = 1-(2-carboxyphenylamino)-1-deoxy-D-ribulose 5-phosphate. The protein operates within amino-acid biosynthesis; L-tryptophan biosynthesis; L-tryptophan from chorismate: step 3/5. This Rhodopseudomonas palustris (strain BisA53) protein is N-(5'-phosphoribosyl)anthranilate isomerase.